A 217-amino-acid polypeptide reads, in one-letter code: Vesicle transport through interaction with t-SNAREs homolog 1A (217 aa).

Over 1-192 (MSSDFEGYEQ…GMLRRIIQNR (192 aa)) the chain is Cytoplasmic. Coiled-coil stretches lie at residues 31 to 92 (PDEK…KRSR) and 112 to 178 (ENQR…GKSS). The helical transmembrane segment at 193–213 (ILLVILGIIVVITILMAITFS) threads the bilayer. The Extracellular segment spans residues 214–217 (VRRH).

It belongs to the VTI1 family. As to quaternary structure, interacts with distinct SNARE complexes that contain either STX5 or STX6. Interacts with NAPA and, to a lesser extent, with NAPG. Identified in a complex containing STX6, STX12, VAMP4 and VTI1A.

Its subcellular location is the cytoplasmic vesicle. It localises to the golgi apparatus membrane. Its function is as follows. V-SNARE that mediates vesicle transport pathways through interactions with t-SNAREs on the target membrane. These interactions are proposed to mediate aspects of the specificity of vesicle trafficking and to promote fusion of the lipid bilayers. Involved in vesicular transport from the late endosomes to the trans-Golgi network. Along with VAMP7, involved in an non-conventional RAB1-dependent traffic route to the cell surface used by KCNIP1 and KCND2. May be involved in increased cytokine secretion associated with cellular senescence. The protein is Vesicle transport through interaction with t-SNAREs homolog 1A (VTI1A) of Homo sapiens (Human).